The following is a 210-amino-acid chain: Protein SgcE (210 aa).

Serine 6 contacts substrate. 3 residues coordinate a divalent metal cation: histidine 31, aspartate 33, and histidine 64. Aspartate 33 serves as the catalytic Proton acceptor. Substrate-binding positions include histidine 64, 140-143 (DGQG), 169-171 (DGG), and 191-192 (GR). Residue aspartate 169 coordinates a divalent metal cation. The active-site Proton donor is aspartate 169.

The protein belongs to the ribulose-phosphate 3-epimerase family. The cofactor is Co(2+). Fe(2+) is required as a cofactor. It depends on Mn(2+) as a cofactor. Requires Zn(2+) as cofactor.

The protein operates within carbohydrate degradation. Its function is as follows. Probable pentose-5-phosphate 3-epimerase. The protein is Protein SgcE (sgcE) of Escherichia coli (strain K12).